The following is a 356-amino-acid chain: Guanine nucleotide-binding protein alpha-2 subunit (356 aa).

The segment at 1–25 is disordered; sequence MGLCQSEEEKVGSQKSRAIDKEIKQ. Gly-2 carries the N-myristoyl glycine lipid modification. Cys-4 carries the S-palmitoyl cysteine lipid modification. Residues 7–25 are compositionally biased toward basic and acidic residues; sequence EEEKVGSQKSRAIDKEIKQ. One can recognise a G-alpha domain in the interval 14-338; that stretch reads QKSRAIDKEI…TDTNQVQKIL (325 aa). A G1 motif region spans residues 17–30; it reads RAIDKEIKQNQSND. GTP is bound by residues Gln-25, Gln-27, Ser-28, Asn-29, Asp-30, Val-135, Glu-160, Ala-166, Val-188, Glu-254, Ser-255, Cys-257, and Phe-310. A Mg(2+)-binding site is contributed by Asn-29. The tract at residues 158 to 166 is G2 motif; that stretch reads FFENLDRIA. Ala-166 lines the Mg(2+) pocket. A G3 motif region spans residues 181–190; the sequence is RTKTTGIVEV. The G4 motif stretch occupies residues 250–257; it reads MRLFESIC. The tract at residues 308–313 is G5 motif; it reads QKFEAL.

The protein belongs to the G-alpha family. G(q) subfamily. As to quaternary structure, g proteins are composed of 3 units; alpha, beta and gamma. The alpha chain contains the guanine nucleotide binding site. The cofactor is Mg(2+).

Its function is as follows. Guanine nucleotide-binding proteins (G proteins) are involved as modulators or transducers in various transmembrane signaling systems. Involved in behavioral responses to P.aeruginosa by controlling the expression of daf-7, a member of the TGF-beta family, in ASJ sensory neurons. The chain is Guanine nucleotide-binding protein alpha-2 subunit (gpa-2) from Caenorhabditis briggsae.